The chain runs to 131 residues: Small ribosomal subunit protein uS9 (131 aa).

This sequence belongs to the universal ribosomal protein uS9 family.

In Haemophilus ducreyi (strain 35000HP / ATCC 700724), this protein is Small ribosomal subunit protein uS9.